Consider the following 125-residue polypeptide: Succinate dehydrogenase cytochrome b556 subunit (125 aa).

The Cytoplasmic segment spans residues 1–29 (MTKTKQEIYNKRPTSPHLTIYKPQISSTL). A helical transmembrane segment spans residues 30 to 55 (SILHRMTGVALFFAVSILAWWFILSK). At 56 to 68 (FDSNYIKLANCCC) the chain is on the periplasmic side. Residues 69 to 89 (IIKICLILTSFAWFYHLCNGI) form a helical membrane-spanning segment. Residue histidine 84 coordinates heme. Over 90–104 (RHLFWDIGLGFSIKA) the chain is Cytoplasmic. A helical membrane pass occupies residues 105–125 (VNLTGWSVVICSVLFTILLWV).

Belongs to the cytochrome b560 family. Part of an enzyme complex containing four subunits: a flavoprotein, an iron-sulfur protein, plus two membrane-anchoring proteins, SdhC and SdhD. The complex can form homotrimers. The cofactor is heme.

Its subcellular location is the cell inner membrane. Its pathway is carbohydrate metabolism; tricarboxylic acid cycle. In terms of biological role, membrane-anchoring subunit of succinate dehydrogenase (SDH). The sequence is that of Succinate dehydrogenase cytochrome b556 subunit (sdhC) from Rickettsia bellii (strain RML369-C).